The chain runs to 230 residues: Ureidoacrylate amidohydrolase RutB (230 aa).

The active-site Proton acceptor is D23. K132 is an active-site residue. The active-site Nucleophile is C165.

It belongs to the isochorismatase family. RutB subfamily.

It carries out the reaction (Z)-3-ureidoacrylate + H2O + H(+) = (Z)-3-aminoacrylate + NH4(+) + CO2. The catalysed reaction is (Z)-3-ureidoacrylate + H2O = (Z)-3-aminoacrylate + carbamate + H(+). It catalyses the reaction (Z)-2-methylureidoacrylate + H2O + H(+) = (Z)-2-methylaminoacrylate + NH4(+) + CO2. In terms of biological role, hydrolyzes ureidoacrylate to form aminoacrylate and carbamate. The carbamate hydrolyzes spontaneously, thereby releasing one of the nitrogen atoms of the pyrimidine ring as ammonia and one of its carbon atoms as CO2. This chain is Ureidoacrylate amidohydrolase RutB, found in Yersinia enterocolitica serotype O:8 / biotype 1B (strain NCTC 13174 / 8081).